Reading from the N-terminus, the 261-residue chain is Cytochrome c oxidase subunit 3 (261 aa).

At 1 to 15 the chain is on the mitochondrial matrix side; it reads MTHQTHAYHMVNPSP. Residues 16 to 34 form a helical membrane-spanning segment; that stretch reads WPLTGALSALLMTSGLIMW. Residues 35–40 lie on the Mitochondrial intermembrane side of the membrane; that stretch reads FHFNSM. Residues 41-66 traverse the membrane as a helical segment; it reads YLLMLGLTTNTLTMYQWWRDIVREST. At 67–72 the chain is on the mitochondrial matrix side; it reads FQGHHT. The chain crosses the membrane as a helical span at residues 73-105; that stretch reads PIVQKGLRYGMILFIVSEVFFFAGFFWAFYHSS. The Mitochondrial intermembrane segment spans residues 106–128; it reads LAPTPELGGCWPPTGITPLNPME. The helical transmembrane segment at 129–152 threads the bilayer; it reads VPLLNTSVLLASGVSITWAHHSLM. The Mitochondrial matrix portion of the chain corresponds to 153 to 155; that stretch reads EGN. Residues 156-183 form a helical membrane-spanning segment; that stretch reads RKHMLQALFITISLGVYFTLLQASEYYE. Residues 184-190 are Mitochondrial intermembrane-facing; it reads TPFTISD. The helical transmembrane segment at 191 to 223 threads the bilayer; the sequence is GIYGSTFFMATGFHGLHVIIGSTFLIVCFMRQL. Topologically, residues 224-232 are mitochondrial matrix; the sequence is KFHFTSNHH. Residues 233–256 traverse the membrane as a helical segment; the sequence is FGFEAAAWYWHFVDVVWLFLYVSI. Topologically, residues 257-261 are mitochondrial intermembrane; sequence YWWGS.

It belongs to the cytochrome c oxidase subunit 3 family. As to quaternary structure, component of the cytochrome c oxidase (complex IV, CIV), a multisubunit enzyme composed of 14 subunits. The complex is composed of a catalytic core of 3 subunits MT-CO1, MT-CO2 and MT-CO3, encoded in the mitochondrial DNA, and 11 supernumerary subunits COX4I, COX5A, COX5B, COX6A, COX6B, COX6C, COX7A, COX7B, COX7C, COX8 and NDUFA4, which are encoded in the nuclear genome. The complex exists as a monomer or a dimer and forms supercomplexes (SCs) in the inner mitochondrial membrane with NADH-ubiquinone oxidoreductase (complex I, CI) and ubiquinol-cytochrome c oxidoreductase (cytochrome b-c1 complex, complex III, CIII), resulting in different assemblies (supercomplex SCI(1)III(2)IV(1) and megacomplex MCI(2)III(2)IV(2)).

The protein localises to the mitochondrion inner membrane. The catalysed reaction is 4 Fe(II)-[cytochrome c] + O2 + 8 H(+)(in) = 4 Fe(III)-[cytochrome c] + 2 H2O + 4 H(+)(out). Component of the cytochrome c oxidase, the last enzyme in the mitochondrial electron transport chain which drives oxidative phosphorylation. The respiratory chain contains 3 multisubunit complexes succinate dehydrogenase (complex II, CII), ubiquinol-cytochrome c oxidoreductase (cytochrome b-c1 complex, complex III, CIII) and cytochrome c oxidase (complex IV, CIV), that cooperate to transfer electrons derived from NADH and succinate to molecular oxygen, creating an electrochemical gradient over the inner membrane that drives transmembrane transport and the ATP synthase. Cytochrome c oxidase is the component of the respiratory chain that catalyzes the reduction of oxygen to water. Electrons originating from reduced cytochrome c in the intermembrane space (IMS) are transferred via the dinuclear copper A center (CU(A)) of subunit 2 and heme A of subunit 1 to the active site in subunit 1, a binuclear center (BNC) formed by heme A3 and copper B (CU(B)). The BNC reduces molecular oxygen to 2 water molecules using 4 electrons from cytochrome c in the IMS and 4 protons from the mitochondrial matrix. The chain is Cytochrome c oxidase subunit 3 (MT-CO3) from Halichoerus grypus (Gray seal).